The following is a 325-amino-acid chain: HTH-type transcriptional regulator BbuR (325 aa).

The 58-residue stretch at 15-72 (LDTDLLNVFCWVAKTQSFSRAAAELGTSQPVITRKIGRLEECLGVALFVRSNRGCVLT) folds into the HTH lysR-type domain. Residues 32-51 (FSRAAAELGTSQPVITRKIG) constitute a DNA-binding region (H-T-H motif).

It belongs to the LysR transcriptional regulatory family.

The chain is HTH-type transcriptional regulator BbuR (bbuR) from Bordetella bronchiseptica (strain ATCC BAA-588 / NCTC 13252 / RB50) (Alcaligenes bronchisepticus).